Here is a 273-residue protein sequence, read N- to C-terminus: Putative phosphoenolpyruvate synthase regulatory protein (273 aa).

Position 153–160 (153–160) interacts with ADP; sequence GVSRSGKT.

Belongs to the pyruvate, phosphate/water dikinase regulatory protein family. PSRP subfamily.

The enzyme catalyses [pyruvate, water dikinase] + ADP = [pyruvate, water dikinase]-phosphate + AMP + H(+). It catalyses the reaction [pyruvate, water dikinase]-phosphate + phosphate + H(+) = [pyruvate, water dikinase] + diphosphate. Bifunctional serine/threonine kinase and phosphorylase involved in the regulation of the phosphoenolpyruvate synthase (PEPS) by catalyzing its phosphorylation/dephosphorylation. This chain is Putative phosphoenolpyruvate synthase regulatory protein, found in Polaromonas sp. (strain JS666 / ATCC BAA-500).